The primary structure comprises 235 residues: Aspartate/glutamate leucyltransferase (235 aa).

The protein belongs to the R-transferase family. Bpt subfamily.

It localises to the cytoplasm. The enzyme catalyses N-terminal L-glutamyl-[protein] + L-leucyl-tRNA(Leu) = N-terminal L-leucyl-L-glutamyl-[protein] + tRNA(Leu) + H(+). The catalysed reaction is N-terminal L-aspartyl-[protein] + L-leucyl-tRNA(Leu) = N-terminal L-leucyl-L-aspartyl-[protein] + tRNA(Leu) + H(+). Functionally, functions in the N-end rule pathway of protein degradation where it conjugates Leu from its aminoacyl-tRNA to the N-termini of proteins containing an N-terminal aspartate or glutamate. In Pseudomonas syringae pv. syringae (strain B728a), this protein is Aspartate/glutamate leucyltransferase.